A 697-amino-acid chain; its full sequence is Tryptophan synthase (697 aa).

The interval methionine 1–tyrosine 298 is tryptophan synthase alpha chain. Catalysis depends on proton acceptor residues glutamate 50 and aspartate 61. A tryptophan synthase beta chain region spans residues tyrosine 298–phenylalanine 697. Lysine 381 carries the N6-(pyridoxal phosphate)lysine modification.

This sequence in the N-terminal section; belongs to the TrpA family. It in the C-terminal section; belongs to the TrpB family. It depends on pyridoxal 5'-phosphate as a cofactor.

The catalysed reaction is (1S,2R)-1-C-(indol-3-yl)glycerol 3-phosphate + L-serine = D-glyceraldehyde 3-phosphate + L-tryptophan + H2O. It participates in amino-acid biosynthesis; L-tryptophan biosynthesis; L-tryptophan from chorismate: step 5/5. The polypeptide is Tryptophan synthase (trp2) (Schizosaccharomyces pombe (strain 972 / ATCC 24843) (Fission yeast)).